The sequence spans 250 residues: Probable aquaporin TIP2-2 (250 aa).

N-acetylmethionine is present on M1. Residues 1-24 (MVKIEIGSVGDSFSVASLKAYLSE) are Cytoplasmic-facing. At K3 the chain carries N6,N6-dimethyllysine. The helical transmembrane segment at 25–45 (FIATLLFVFAGVGSALAFAKL) threads the bilayer. Residues 46–53 (TSDAALDP) are Vacuolar-facing. The helical transmembrane segment at 54-74 (AGLVAVAVAHAFALFVGVSIA) threads the bilayer. Topologically, residues 75 to 101 (ANISGGHLNPAVTLGLAVGGNITVITG) are cytoplasmic. Residues 83–85 (NPA) carry the NPA 1 motif. The chain crosses the membrane as a helical span at residues 102-122 (FFYWIAQCLGSIVACLLLVFV). Over 123 to 133 (TNGESVPTHGV) the chain is Vacuolar. A helical transmembrane segment spans residues 134–154 (AAGLGAIEGVVMEIVVTFALV). Residues 155 to 168 (YTVYATAADPKKGS) are Cytoplasmic-facing. Residues 169 to 189 (LGTIAPIAIGFIVGANILAAG) traverse the membrane as a helical segment. The Vacuolar segment spans residues 190 to 210 (PFSGGSMNPARSFGPAVVSGD). The NPA 2 signature appears at 197 to 199 (NPA). A helical membrane pass occupies residues 211–231 (FSQIWIYWVGPLVGGALAGLI). Residues 232-250 (YGDVFIGSYAPAPTTESYP) are Cytoplasmic-facing. Residue S248 is modified to Phosphoserine.

The protein belongs to the MIP/aquaporin (TC 1.A.8) family. TIP (TC 1.A.8.10) subfamily. As to quaternary structure, interacts with cucumber mosaic virus (CMV) Protein 1a. Expressed above groung and in roots.

The protein localises to the vacuole membrane. In terms of biological role, aquaporins facilitate the transport of water and small neutral solutes across cell membranes. The chain is Probable aquaporin TIP2-2 (TIP2-2) from Arabidopsis thaliana (Mouse-ear cress).